Reading from the N-terminus, the 199-residue chain is Recombination protein RecR (199 aa).

The C4-type zinc finger occupies 57–72 (CSICGNITEGDPCSIC). Residues 80–176 (THVLVVEQPK…KVTRLAHGLS (97 aa)) enclose the Toprim domain.

Belongs to the RecR family.

May play a role in DNA repair. It seems to be involved in an RecBC-independent recombinational process of DNA repair. It may act with RecF and RecO. The polypeptide is Recombination protein RecR (Levilactobacillus brevis (strain ATCC 367 / BCRC 12310 / CIP 105137 / JCM 1170 / LMG 11437 / NCIMB 947 / NCTC 947) (Lactobacillus brevis)).